The following is a 940-amino-acid chain: Isoleucine--tRNA ligase (940 aa).

A 'HIGH' region motif is present at residues 58–68; sequence PYANGNIHIGH. Glu563 provides a ligand contact to L-isoleucyl-5'-AMP. A 'KMSKS' region motif is present at residues 604–608; the sequence is KMSKS. An ATP-binding site is contributed by Lys607. Zn(2+) is bound by residues Cys903, Cys906, Cys923, and Cys926.

The protein belongs to the class-I aminoacyl-tRNA synthetase family. IleS type 1 subfamily. In terms of assembly, monomer. It depends on Zn(2+) as a cofactor.

It localises to the cytoplasm. It catalyses the reaction tRNA(Ile) + L-isoleucine + ATP = L-isoleucyl-tRNA(Ile) + AMP + diphosphate. Functionally, catalyzes the attachment of isoleucine to tRNA(Ile). As IleRS can inadvertently accommodate and process structurally similar amino acids such as valine, to avoid such errors it has two additional distinct tRNA(Ile)-dependent editing activities. One activity is designated as 'pretransfer' editing and involves the hydrolysis of activated Val-AMP. The other activity is designated 'posttransfer' editing and involves deacylation of mischarged Val-tRNA(Ile). This Buchnera aphidicola subsp. Acyrthosiphon pisum (strain 5A) protein is Isoleucine--tRNA ligase.